Consider the following 547-residue polypeptide: MAAKDVKFGRDARERILRGVDILADAVKVTLGPKGRNVVIDKSFGAPRITKDGVSVAKEIELKDKFENMGAQMLREVASKANDAAGDGTTTATVLAQAIVREGMTAVAAGMNPMDLKRGIDIAVGKVVENLKARSTPVAGSSEIAQVGIISANGDTEVGQKIAEAMEKVGKEGVITVEEAKGLEFELDVVEGMQFDRGYLSPYFITNPEKMTVELENPYILIHEKKLSSLQAMLPILEAVVQSGRPLLIIAEDIEGEALATLVVNKLRGGLKIAAVKAPGFGDRRKAMLGDIATLTAGEMISEDLGIKLESVTLAMLGQAKKVTIDKDNTTIVDGAGSAEEIKARVEQIRAQIEVTTSDYDREKLQERLAKLAGGVAVIKVGGATEVEVKERKDRVDDALHATRAAVEEGIVPGGGTALLYATKALEGLKGANDDQTKGIDIVRRAIQAPIRQIAANAGHDGAVVSGNLLRENDENQGFNAATDTYENLKAAGVIDPTKVVRTALQDAASVSGLLITTEAAISEKPDDKPAMPPMGGGMGGMGGMDF.

Residues 30–33, Lys51, 87–91, Gly415, 480–482, and Asp496 contribute to the ATP site; these read TLGP, DGTTT, and NAA. Residues 525–547 form a disordered region; sequence KPDDKPAMPPMGGGMGGMGGMDF. A compositionally biased stretch (gly residues) spans 535 to 547; that stretch reads MGGGMGGMGGMDF.

It belongs to the chaperonin (HSP60) family. In terms of assembly, forms a cylinder of 14 subunits composed of two heptameric rings stacked back-to-back. Interacts with the co-chaperonin GroES.

It is found in the cytoplasm. It catalyses the reaction ATP + H2O + a folded polypeptide = ADP + phosphate + an unfolded polypeptide.. Together with its co-chaperonin GroES, plays an essential role in assisting protein folding. The GroEL-GroES system forms a nano-cage that allows encapsulation of the non-native substrate proteins and provides a physical environment optimized to promote and accelerate protein folding. This is Chaperonin GroEL from Novosphingobium aromaticivorans (strain ATCC 700278 / DSM 12444 / CCUG 56034 / CIP 105152 / NBRC 16084 / F199).